The following is a 293-amino-acid chain: MPASDPRRLRSPLNPSIHSPFVIRQLPFEMDFSATASLPIGFSSLFLLTEVYIRHVESSRRRDISLLSNCWYIAVNTGLWICCLVLSIVALVLRIEAVSLSSCQLAWMQAAVLKASDAQLWQPSADQLQVYHLRILLFLPGESSWPYGVLALVLTACLQCAAAGLCVWDAAPGLTPHLTRSALVPILHVGWGLHYTVFLLWILRICSLKGNDLRHIWKWRVWCLLVAPLFISALVGATPLTLWYPPKITFLFWCRKQQMRWRMLGERGAVQSLRSVSSTVRAQPTSHPYPAAL.

5 helical membrane-spanning segments follow: residues 33 to 53 (SATASLPIGFSSLFLLTEVYI), 73 to 93 (IAVNTGLWICCLVLSIVALVL), 148 to 168 (GVLALVLTACLQCAAAGLCVW), 183 to 203 (LVPILHVGWGLHYTVFLLWIL), and 221 to 241 (VWCLLVAPLFISALVGATPLT).

It is found in the membrane. Its pathway is mycotoxin biosynthesis. In terms of biological role, part of the gene clusters that mediate the biosynthesis of AM-toxins, host-selective toxins (HSTs) causing Alternaria blotch on apple, a worldwide distributed disease. AM-toxins are cyclic depsipeptides containing the 3 residues 2-hydroxy-isovaleric acid (2-HIV), dehydroalanine, L-alanine which are common for all 3 AM-toxins I to III. The fourth precursor is L-alpha-amino-methoxyphenyl-valeric acid (L-Amv) for AM-toxin I, L-alpha-amino-phenyl-valeric acid (L-Apv) for AM-toxin II, and L-alpha-amino-hydroxyphenyl-valeric acid (L-Ahv) for AM-toxin III. AM-toxins have two target sites for affecting susceptible apple cells; they cause invagination of the plasma membrane and electrolyte loss and chloroplast disorganization. The non-ribosomal peptide synthetase AMT1 contains 4 catalytic modules and is responsible for activation of each residue in AM-toxin. The aldo-keto reductase AMT2 catalyzes the conversion of 2-keto-isovaleric acid (2-KIV) to 2-hydroxy-isovaleric acid (2-HIV), one of the precursor residues incorporated by AMT1 during AM-toxin biosynthesis, by reduction of its ketone to an alcohol. The cytochrome P450 monooxygenase AMT3 and the thioesterase AMT4 are also important for AM-toxin production, but their exact function within the AM-toxin biosynthesis are not known yet. Up to 21 proteins (including AMT1 to AMT4) are predicted to be involved in AM-toxin biosynthesis since their expression ishighly up-regulated in AM-toxin-producing cultures. The polypeptide is AM-toxin biosynthesis protein 14 (Alternaria alternata (Alternaria rot fungus)).